Here is a 336-residue protein sequence, read N- to C-terminus: UDP-N-acetylglucosamine--N-acetylmuramyl-(pentapeptide) pyrophosphoryl-undecaprenol N-acetylglucosamine transferase (336 aa).

Residues 10 to 12, N124, R157, S179, and Q277 contribute to the UDP-N-acetyl-alpha-D-glucosamine site; that span reads TGG.

The protein belongs to the glycosyltransferase 28 family. MurG subfamily.

It localises to the cell inner membrane. The enzyme catalyses di-trans,octa-cis-undecaprenyl diphospho-N-acetyl-alpha-D-muramoyl-L-alanyl-D-glutamyl-meso-2,6-diaminopimeloyl-D-alanyl-D-alanine + UDP-N-acetyl-alpha-D-glucosamine = di-trans,octa-cis-undecaprenyl diphospho-[N-acetyl-alpha-D-glucosaminyl-(1-&gt;4)]-N-acetyl-alpha-D-muramoyl-L-alanyl-D-glutamyl-meso-2,6-diaminopimeloyl-D-alanyl-D-alanine + UDP + H(+). It participates in cell wall biogenesis; peptidoglycan biosynthesis. In terms of biological role, cell wall formation. Catalyzes the transfer of a GlcNAc subunit on undecaprenyl-pyrophosphoryl-MurNAc-pentapeptide (lipid intermediate I) to form undecaprenyl-pyrophosphoryl-MurNAc-(pentapeptide)GlcNAc (lipid intermediate II). This Wolinella succinogenes (strain ATCC 29543 / DSM 1740 / CCUG 13145 / JCM 31913 / LMG 7466 / NCTC 11488 / FDC 602W) (Vibrio succinogenes) protein is UDP-N-acetylglucosamine--N-acetylmuramyl-(pentapeptide) pyrophosphoryl-undecaprenol N-acetylglucosamine transferase.